A 73-amino-acid chain; its full sequence is Small ribosomal subunit protein bS18 (73 aa).

It belongs to the bacterial ribosomal protein bS18 family. In terms of assembly, part of the 30S ribosomal subunit. Forms a tight heterodimer with protein bS6.

Binds as a heterodimer with protein bS6 to the central domain of the 16S rRNA, where it helps stabilize the platform of the 30S subunit. The polypeptide is Small ribosomal subunit protein bS18 (Coxiella burnetii (strain Dugway 5J108-111)).